We begin with the raw amino-acid sequence, 677 residues long: DNA ligase (677 aa).

NAD(+)-binding positions include 32–36, 81–82, and Glu112; these read DAQYD and SL. Lys114 functions as the N6-AMP-lysine intermediate in the catalytic mechanism. Residues Arg135, Glu171, Lys288, and Lys312 each coordinate NAD(+). Zn(2+) is bound by residues Cys416, Cys419, Cys434, and Cys439. Residues 598–677 enclose the BRCT domain; it reads NKNMPFSGME…REFINMLEQS (80 aa).

This sequence belongs to the NAD-dependent DNA ligase family. LigA subfamily. The cofactor is Mg(2+). Mn(2+) serves as cofactor.

The catalysed reaction is NAD(+) + (deoxyribonucleotide)n-3'-hydroxyl + 5'-phospho-(deoxyribonucleotide)m = (deoxyribonucleotide)n+m + AMP + beta-nicotinamide D-nucleotide.. Its function is as follows. DNA ligase that catalyzes the formation of phosphodiester linkages between 5'-phosphoryl and 3'-hydroxyl groups in double-stranded DNA using NAD as a coenzyme and as the energy source for the reaction. It is essential for DNA replication and repair of damaged DNA. The sequence is that of DNA ligase from Dehalococcoides mccartyi (strain CBDB1).